A 535-amino-acid chain; its full sequence is Cytochrome c oxidase subunit 1 (535 aa).

The helical transmembrane segment at 15-37 (IAILYFIFSTFCGLAGTAMSFII) threads the bilayer. 3 residues coordinate Ca(2+): E40, A43, and G45. The next 5 membrane-spanning stretches (helical) occupy residues 58-80 (VLVTGHTILMVFFLVMPMLIGGF), 147-169 (LAIFSLHLTTISSLLGTINFIVT), 190-212 (ILITAVMLLMSLPVLSAGVTMLL), 238-260 (WFFGHPEVYIMIVPTFGMMSHIV), and 267-289 (PVFGEISMIYTMGSISLLGFLVW). H63 provides a ligand contact to Fe(II)-heme a. Position 242 (H242) interacts with Cu cation. The segment at residues 242 to 246 (HPEVY) is a cross-link (1'-histidyl-3'-tyrosine (His-Tyr)). Position 246 (Y246) interacts with O2. Positions 291 and 292 each coordinate Cu cation. 2 consecutive transmembrane segments (helical) span residues 304–326 (AYFTSATMIITIPTSIKVFSWLT) and 339–361 (MLYTLSFLFLFTVGGLTGVVLAN). The Mg(2+) site is built by H369 and D370. 2 helical membrane-spanning segments follow: residues 376 to 398 (THFHYVLSLGAVFSMFAGYYYWS) and 415 to 437 (FWLIFLGTNIIFFPMHFLGINGM). H377 is a heme a3 binding site. H379 provides a ligand contact to Fe(II)-heme a. P442 is a binding site for Ca(2+). Residues 452 to 474 (NLVSSFGSMMTIMSLMLFTYIIY) form a helical membrane-spanning segment.

Belongs to the heme-copper respiratory oxidase family. Component of the cytochrome c oxidase (complex IV, CIV), a multisubunit enzyme composed of a catalytic core of 3 subunits and several supernumerary subunits. The complex exists as a monomer or a dimer and forms supercomplexes (SCs) in the inner mitochondrial membrane with ubiquinol-cytochrome c oxidoreductase (cytochrome b-c1 complex, complex III, CIII). The cofactor is heme. It depends on Cu cation as a cofactor.

It localises to the mitochondrion inner membrane. It catalyses the reaction 4 Fe(II)-[cytochrome c] + O2 + 8 H(+)(in) = 4 Fe(III)-[cytochrome c] + 2 H2O + 4 H(+)(out). The protein operates within energy metabolism; oxidative phosphorylation. Its function is as follows. Component of the cytochrome c oxidase, the last enzyme in the mitochondrial electron transport chain which drives oxidative phosphorylation. The respiratory chain contains 3 multisubunit complexes succinate dehydrogenase (complex II, CII), ubiquinol-cytochrome c oxidoreductase (cytochrome b-c1 complex, complex III, CIII) and cytochrome c oxidase (complex IV, CIV), that cooperate to transfer electrons derived from NADH and succinate to molecular oxygen, creating an electrochemical gradient over the inner membrane that drives transmembrane transport and the ATP synthase. Cytochrome c oxidase is the component of the respiratory chain that catalyzes the reduction of oxygen to water. Electrons originating from reduced cytochrome c in the intermembrane space (IMS) are transferred via the dinuclear copper A center (CU(A)) of subunit 2 and heme A of subunit 1 to the active site in subunit 1, a binuclear center (BNC) formed by heme A3 and copper B (CU(B)). The BNC reduces molecular oxygen to 2 water molecules using 4 electrons from cytochrome c in the IMS and 4 protons from the mitochondrial matrix. This chain is Cytochrome c oxidase subunit 1 (COX1), found in Eremothecium gossypii (strain ATCC 10895 / CBS 109.51 / FGSC 9923 / NRRL Y-1056) (Yeast).